We begin with the raw amino-acid sequence, 235 residues long: Large ribosomal subunit protein uL1 (235 aa).

Belongs to the universal ribosomal protein uL1 family. Part of the 50S ribosomal subunit.

Functionally, binds directly to 23S rRNA. The L1 stalk is quite mobile in the ribosome, and is involved in E site tRNA release. In terms of biological role, protein L1 is also a translational repressor protein, it controls the translation of the L11 operon by binding to its mRNA. This chain is Large ribosomal subunit protein uL1, found in Synechococcus sp. (strain CC9311).